The chain runs to 381 residues: Creatine kinase M-type (381 aa).

Positions Lys-11–Gly-98 constitute a Phosphagen kinase N-terminal domain. Positions Tyr-125 to Leu-367 constitute a Phosphagen kinase C-terminal domain. ATP contacts are provided by residues Ser-128–Arg-132, His-191, Arg-236, Arg-292, Arg-320–Val-325, and Asp-335.

It belongs to the ATP:guanido phosphotransferase family. Dimer of identical or non-identical chains. With MM being the major form in skeletal muscle and myocardium, MB existing in myocardium, and BB existing in many tissues, especially brain.

The protein localises to the cytoplasm. It carries out the reaction creatine + ATP = N-phosphocreatine + ADP + H(+). Its function is as follows. Reversibly catalyzes the transfer of phosphate between ATP and various phosphogens (e.g. creatine phosphate). Creatine kinase isoenzymes play a central role in energy transduction in tissues with large, fluctuating energy demands, such as skeletal muscle, heart, brain and spermatozoa. The polypeptide is Creatine kinase M-type (Torpedo marmorata (Marbled electric ray)).